A 134-amino-acid polypeptide reads, in one-letter code: Retinoid-binding protein 7 (134 aa).

The protein belongs to the calycin superfamily. Fatty-acid binding protein (FABP) family. As to expression, expressed primarily in kidney, heart and transverse colon. Detected in adult lymph node, appendix, ascending colon, and in fetal heart and spleen.

The protein resides in the cytoplasm. In terms of biological role, intracellular transport of retinol. This is Retinoid-binding protein 7 (RBP7) from Homo sapiens (Human).